A 312-amino-acid chain; its full sequence is Acetyl-coenzyme A carboxylase carboxyl transferase subunit alpha (312 aa).

The CoA carboxyltransferase C-terminal domain maps to 36–286 (ELEKEIEKTF…KTYFLESVKA (251 aa)).

It belongs to the AccA family. Acetyl-CoA carboxylase is a heterohexamer composed of biotin carboxyl carrier protein (AccB), biotin carboxylase (AccC) and two subunits each of ACCase subunit alpha (AccA) and ACCase subunit beta (AccD).

The protein localises to the cytoplasm. It catalyses the reaction N(6)-carboxybiotinyl-L-lysyl-[protein] + acetyl-CoA = N(6)-biotinyl-L-lysyl-[protein] + malonyl-CoA. It participates in lipid metabolism; malonyl-CoA biosynthesis; malonyl-CoA from acetyl-CoA: step 1/1. Component of the acetyl coenzyme A carboxylase (ACC) complex. First, biotin carboxylase catalyzes the carboxylation of biotin on its carrier protein (BCCP) and then the CO(2) group is transferred by the carboxyltransferase to acetyl-CoA to form malonyl-CoA. The chain is Acetyl-coenzyme A carboxylase carboxyl transferase subunit alpha from Sulfurovum sp. (strain NBC37-1).